Here is a 347-residue protein sequence, read N- to C-terminus: N-acetyl-gamma-glutamyl-phosphate reductase (347 aa).

Cys153 is a catalytic residue.

Belongs to the NAGSA dehydrogenase family. Type 1 subfamily.

The protein localises to the cytoplasm. The enzyme catalyses N-acetyl-L-glutamate 5-semialdehyde + phosphate + NADP(+) = N-acetyl-L-glutamyl 5-phosphate + NADPH + H(+). It participates in amino-acid biosynthesis; L-arginine biosynthesis; N(2)-acetyl-L-ornithine from L-glutamate: step 3/4. In terms of biological role, catalyzes the NADPH-dependent reduction of N-acetyl-5-glutamyl phosphate to yield N-acetyl-L-glutamate 5-semialdehyde. This is N-acetyl-gamma-glutamyl-phosphate reductase from Mycobacterium avium (strain 104).